Reading from the N-terminus, the 132-residue chain is Small ribosomal subunit protein uS8c (132 aa).

It belongs to the universal ribosomal protein uS8 family. Part of the 30S ribosomal subunit.

It is found in the plastid. The protein resides in the chloroplast. One of the primary rRNA binding proteins, it binds directly to 16S rRNA central domain where it helps coordinate assembly of the platform of the 30S subunit. The sequence is that of Small ribosomal subunit protein uS8c (rps8) from Buxus microphylla (Littleleaf boxwood).